We begin with the raw amino-acid sequence, 601 residues long: Elongation factor 4 (601 aa).

The tr-type G domain maps to 6 to 188 (QFIRNFSIIA…AITKEIPAPK (183 aa)). GTP contacts are provided by residues 18 to 23 (DHGKST) and 135 to 138 (NKID).

The protein belongs to the TRAFAC class translation factor GTPase superfamily. Classic translation factor GTPase family. LepA subfamily.

It is found in the cell inner membrane. It carries out the reaction GTP + H2O = GDP + phosphate + H(+). Its function is as follows. Required for accurate and efficient protein synthesis under certain stress conditions. May act as a fidelity factor of the translation reaction, by catalyzing a one-codon backward translocation of tRNAs on improperly translocated ribosomes. Back-translocation proceeds from a post-translocation (POST) complex to a pre-translocation (PRE) complex, thus giving elongation factor G a second chance to translocate the tRNAs correctly. Binds to ribosomes in a GTP-dependent manner. This is Elongation factor 4 from Leptospira borgpetersenii serovar Hardjo-bovis (strain JB197).